Here is a 472-residue protein sequence, read N- to C-terminus: Ribosomal protein uS12 methylthiotransferase RimO (472 aa).

The MTTase N-terminal domain occupies asparagine 33 to proline 143. Residues cysteine 42, cysteine 78, cysteine 107, cysteine 175, cysteine 179, and cysteine 182 each coordinate [4Fe-4S] cluster. Residues leucine 161–glutamate 398 enclose the Radical SAM core domain. Positions alanine 401–aspartate 467 constitute a TRAM domain.

Belongs to the methylthiotransferase family. RimO subfamily. The cofactor is [4Fe-4S] cluster.

It localises to the cytoplasm. It catalyses the reaction L-aspartate(89)-[ribosomal protein uS12]-hydrogen + (sulfur carrier)-SH + AH2 + 2 S-adenosyl-L-methionine = 3-methylsulfanyl-L-aspartate(89)-[ribosomal protein uS12]-hydrogen + (sulfur carrier)-H + 5'-deoxyadenosine + L-methionine + A + S-adenosyl-L-homocysteine + 2 H(+). Its function is as follows. Catalyzes the methylthiolation of an aspartic acid residue of ribosomal protein uS12. This chain is Ribosomal protein uS12 methylthiotransferase RimO, found in Shewanella sp. (strain W3-18-1).